A 1427-amino-acid polypeptide reads, in one-letter code: DNA-directed RNA polymerase subunit beta' (1427 aa).

Positions 70, 72, 85, and 88 each coordinate Zn(2+). Positions 461, 463, and 465 each coordinate Mg(2+). The Zn(2+) site is built by C809, C882, C889, and C892. The disordered stretch occupies residues 1394 to 1427 (EAAIGDDPLGKVQGEDFTTDDVMVEERPEGASEE). The span at 1417–1427 (VEERPEGASEE) shows a compositional bias: basic and acidic residues.

This sequence belongs to the RNA polymerase beta' chain family. The RNAP catalytic core consists of 2 alpha, 1 beta, 1 beta' and 1 omega subunit. When a sigma factor is associated with the core the holoenzyme is formed, which can initiate transcription. Mg(2+) is required as a cofactor. Zn(2+) serves as cofactor.

The enzyme catalyses RNA(n) + a ribonucleoside 5'-triphosphate = RNA(n+1) + diphosphate. In terms of biological role, DNA-dependent RNA polymerase catalyzes the transcription of DNA into RNA using the four ribonucleoside triphosphates as substrates. In Sphingopyxis alaskensis (strain DSM 13593 / LMG 18877 / RB2256) (Sphingomonas alaskensis), this protein is DNA-directed RNA polymerase subunit beta'.